The chain runs to 313 residues: Malate dehydrogenase (313 aa).

NAD(+)-binding positions include 11–16 (GSGNIG) and Asp-35. Residues Arg-84 and Arg-90 each coordinate substrate. Residues Asn-97 and 120-122 (VTN) contribute to the NAD(+) site. Asn-122 and Arg-153 together coordinate substrate. The active-site Proton acceptor is the His-177.

This sequence belongs to the LDH/MDH superfamily. MDH type 3 family.

The enzyme catalyses (S)-malate + NAD(+) = oxaloacetate + NADH + H(+). In terms of biological role, catalyzes the reversible oxidation of malate to oxaloacetate. This chain is Malate dehydrogenase, found in Ehrlichia ruminantium (strain Welgevonden).